We begin with the raw amino-acid sequence, 635 residues long: MQDNNRNLILAMVLSALVMLVWSIFFAPEPVPPAQDTPAASTQGTAQPEAGGPATPGAVPQGAAPELEAAAASSDPSANAGRVAIESSSLAGTISLAGGRIDDLELTGYRETLDTRSPFVRLLSPTAQTTVQAEGSPVAPGGGAELAVQKPYYAVYGWMPAAGTDPALVPGPATVWEVESGAKLGPGQPVTLRWDNGAGQIFRRTYELDDKFLFTVTQTLENTGTAPFSAAPYGILARHGKPDTQNFFVLHEGAVGMTDGKLLEKKYKDMTKLDPLPGEGPAELVEVQENGWIGFTDKYWMTTLAPAPGQSFTAVAKYAPGADIYQTEARMPVQTVAPGATGTSSSYLFAGAKVWEVINGYQTNPGIDRFVDSIDWGWFYFLTKPIFRLLHWLHGMIGNMGWAIIALTFVLKLLVFPLARKSYISMAKMKELQPQMEAIKERTGDDRMKFQKEVMELYKREKVNPAAGCLPVLLQIPIFFALYKVIFVTIELRHAPWIGWIRDLAAPDPSSLWNLFGLLPWAAPGQGSFLHSFTLPVLAILLGVSMWMQQKLNPAPTDPAQKMIFAWMPWVFMFMLGGFASGLVLYWITNNTITIIQQYTIMSMHGHRPDFFGNIRSSLPSRAKAGDKGGDKGGK.

The chain crosses the membrane as a helical span at residues leucine 8 to proline 28. Positions proline 33 to glutamine 61 are disordered. Helical transmembrane passes span methionine 396–phenylalanine 416, leucine 470–isoleucine 490, serine 528–methionine 548, and isoleucine 564–valine 584. The tract at residues isoleucine 615–lysine 635 is disordered. Basic and acidic residues predominate over residues lysine 624–lysine 635.

Belongs to the OXA1/ALB3/YidC family. Type 1 subfamily. As to quaternary structure, interacts with the Sec translocase complex via SecD. Specifically interacts with transmembrane segments of nascent integral membrane proteins during membrane integration.

It localises to the cell inner membrane. Its function is as follows. Required for the insertion and/or proper folding and/or complex formation of integral membrane proteins into the membrane. Involved in integration of membrane proteins that insert both dependently and independently of the Sec translocase complex, as well as at least some lipoproteins. Aids folding of multispanning membrane proteins. The protein is Membrane protein insertase YidC of Paracoccus denitrificans (strain Pd 1222).